A 529-amino-acid polypeptide reads, in one-letter code: Endoglucanase 21 (529 aa).

The signal sequence occupies residues 1-24 (MVAAMTMCAAVAVLLVLTSTMAAA). Asp89 functions as the Nucleophile in the catalytic mechanism. Residue Asn342 is glycosylated (N-linked (GlcNAc...) asparagine). Active-site residues include His429, Asp481, and Glu490.

Belongs to the glycosyl hydrolase 9 (cellulase E) family. In terms of tissue distribution, expressed in roots and flowers.

It localises to the secreted. The enzyme catalyses Endohydrolysis of (1-&gt;4)-beta-D-glucosidic linkages in cellulose, lichenin and cereal beta-D-glucans.. The sequence is that of Endoglucanase 21 (GLU9) from Oryza sativa subsp. japonica (Rice).